The sequence spans 301 residues: MCGIVGLFLKDSRLEPQLGQLLSDMLITMTDRGPDSAGLAIYGSATEGKAKVTIQSAKPEIDFADLERDLAEAGVPARVAVKSTHAVVAIAAARLADVRAVLAAIRPDVRIMGAGDSVEIYKEVGLPKDVVARFDVRSMGGSHGIGHTRMATESAVTTLGAHPFSTGSDQCLVHNGSLSNHNNLRRELIREGIAFETQNDTEVAAAYLTAEMAKGKDLGQALTGALDDLDGFFTFVVGTKSGFGVVRDPIACKPAVMAETDRYVAFGSEYRALVNLPDIESARIWEPEPATVYFWDHQKAA.

Residue Cys2 is part of the active site. The 297-residue stretch at 2-298 (CGIVGLFLKD…PATVYFWDHQ (297 aa)) folds into the Glutamine amidotransferase type-2 domain.

This chain is Glutamine amidotransferase-like protein GlxB (glxB), found in Rhizobium meliloti (strain 1021) (Ensifer meliloti).